The following is a 135-amino-acid chain: UPF0299 membrane protein PC1_1498 (135 aa).

4 helical membrane-spanning segments follow: residues 5 to 25 (FIVCWQYLRAFALIYLCLLAG), 30 to 50 (ALLPFTIPGSIIGMLVLFTLL), 63 to 83 (GCHLLIRHMALLFVPIGVGVM), and 93 to 113 (FGPIVVSCLISTFIVMLVVGF).

The protein belongs to the UPF0299 family.

The protein resides in the cell inner membrane. This Pectobacterium carotovorum subsp. carotovorum (strain PC1) protein is UPF0299 membrane protein PC1_1498.